The following is a 238-amino-acid chain: Triosephosphate isomerase (238 aa).

7–9 provides a ligand contact to substrate; it reads NFK. H91 acts as the Electrophile in catalysis. Catalysis depends on E158, which acts as the Proton acceptor. The substrate site is built by G164 and S200.

It belongs to the triosephosphate isomerase family. In terms of assembly, homodimer.

It localises to the cytoplasm. It carries out the reaction D-glyceraldehyde 3-phosphate = dihydroxyacetone phosphate. The protein operates within carbohydrate biosynthesis; gluconeogenesis. Its pathway is carbohydrate degradation; glycolysis; D-glyceraldehyde 3-phosphate from glycerone phosphate: step 1/1. In terms of biological role, involved in the gluconeogenesis. Catalyzes stereospecifically the conversion of dihydroxyacetone phosphate (DHAP) to D-glyceraldehyde-3-phosphate (G3P). This Ureaplasma parvum serovar 3 (strain ATCC 27815 / 27 / NCTC 11736) protein is Triosephosphate isomerase.